Here is a 689-residue protein sequence, read N- to C-terminus: Zinc finger protein 185 (689 aa).

Disordered stretches follow at residues 1-253 (MSIS…GRTK) and 298-534 (APDV…SCTS). The span at 35–52 (LKGDKSWITKQDESEGRT) shows a compositional bias: basic and acidic residues. Serine 66 carries the phosphoserine modification. Positions 95 to 114 (IDSSSQPQQQFPKANGTPKS) are enriched in polar residues. Position 153 is a phosphoserine (serine 153). Residues 157 to 166 (DTEEEEEEEV) are compositionally biased toward acidic residues. The residue at position 206 (proline 206) is a Phosphoserine. Basic and acidic residues-rich tracts occupy residues 217 to 232 (KRVE…EKSQ) and 310 to 331 (NKDK…EEAF). Over residues 338–349 (AARSSAQLSDGN) the composition is skewed to polar residues. Low complexity-rich tracts occupy residues 373-382 (SSSATSVSAV) and 434-444 (DPAVPAQQPAD). Threonine 447 carries the post-translational modification Phosphothreonine. Positions 448 to 458 (PERQSSPSGSE) are enriched in polar residues. Residues serine 453 and serine 465 each carry the phosphoserine modification. The span at 504 to 524 (PTQQPADPSTPEQQNSPSGSE) shows a compositional bias: polar residues. An LIM zinc-binding domain is found at 627–689 (GICTYCNREI…HCGKCYEKLF (63 aa)).

In terms of tissue distribution, expressed in placenta, pancreas and kidney. Also expressed in prostate, testis, ovary and blood.

Its subcellular location is the cytoplasm. It localises to the cytoskeleton. The protein resides in the cell junction. It is found in the focal adhesion. Its function is as follows. May be involved in the regulation of cellular proliferation and/or differentiation. The polypeptide is Zinc finger protein 185 (ZNF185) (Homo sapiens (Human)).